Reading from the N-terminus, the 431-residue chain is C2H2 type master regulator of conidiophore development brlA (431 aa).

Disordered regions lie at residues 29–51, 211–275, and 287–306; these read MTSS…SHGS, TPQQ…SEEY, and IRTH…VRSN. Residues 30–48 show a composition bias toward low complexity; it reads TSSFSPLESPTPTPTSLYS. Positions 225 to 265 are enriched in polar residues; the sequence is PSSNYSDFPASLQTFKPHTPSTPVRSLSLGTPRSDTPQSRM. Over residues 287–302 the composition is skewed to basic residues; the sequence is IRTHRQPSRKPSKKQL. 2 consecutive C2H2-type zinc fingers follow at residues 321-345 and 351-376; these read FKCK…MKSH and HVCW…TKTH. The segment at 390 to 412 is disordered; the sequence is DETSPDYDPEFRGQLTPDGRPIY.

It is found in the nucleus. Its function is as follows. BrlA, abaA and wetA are pivotal regulators of conidiophore development and conidium maturation. They act individually and together to regulate their own expression and that of numerous other sporulation-specific genes. Binds promoters of target genes at brlA response elements (BREs) containing the conserved sequence 5'-(C/A)(A/G)AGGG(G/A)-3'. Regulates the expression levels of seven secondary metabolism gene clusters including a down-regulated cluster putatively involved in the biosynthesis of the mycotoxins roquefortine C and meleagrin. Negatively regulates the expression of cellulase genes. The chain is C2H2 type master regulator of conidiophore development brlA from Penicillium oxalicum (strain 114-2 / CGMCC 5302) (Penicillium decumbens).